Consider the following 310-residue polypeptide: Manganese ABC transporter substrate-binding lipoprotein PsaA (310 aa).

The N-terminal stretch at 1 to 20 (MKKIASVLALFVALLFGLLA) is a signal peptide. Cys21 carries the N-palmitoyl cysteine lipid modification. Cys21 carries S-diacylglycerol cysteine lipidation. His68, His140, Glu206, and Asp281 together coordinate Mn(2+).

The protein belongs to the bacterial solute-binding protein 9 family. Lipoprotein receptor antigen (Lrai) subfamily.

Its subcellular location is the cell membrane. In terms of biological role, part of the ATP-binding cassette (ABC) transport system PsaABC involved in manganese import. Binds manganese with high affinity and specificity and delivers it to the membrane permease for translocation into the cytoplasm. Also acts as an adhesin which is involved on adherence to extracellular matrix. This is Manganese ABC transporter substrate-binding lipoprotein PsaA from Streptococcus pneumoniae.